We begin with the raw amino-acid sequence, 242 residues long: Neuromodulin (242 aa).

Positions 1 to 242 are disordered; the sequence is MLCCMRRTKQ…EEREADQEHA (242 aa). S-palmitoyl cysteine attachment occurs at residues Cys3 and Cys4. The segment covering 9-32 has biased composition (basic and acidic residues); it reads KQVEKNDEDQKIEQDGIKPEDKAH. Positions 31 to 60 constitute an IQ domain; it reads AHKAATKIQASFRGHITRKKLKGEKKGDAQ. Ser41 is subject to Phosphoserine; by PHK and PKC. Composition is skewed to basic and acidic residues over residues 66-84 and 98-117; these read GNEK…KEGE and KAEE…KGEG. Over residues 142–157 the composition is skewed to polar residues; sequence ETESATKASTDNSPSS. Phosphoserine is present on residues Ser154, Ser156, and Ser157. A compositionally biased stretch (basic and acidic residues) spans 158–170; sequence KAEDAPAKEEPKQ. Low complexity predominate over residues 171–203; that stretch reads ADVPAAVTAAAAATTPAAEDAAAKATAQPPTDA. Thr185 is subject to Phosphothreonine. A phosphoserine; by CK2 mark is found at Ser206 and Ser207. Residues 209-242 are compositionally biased toward basic and acidic residues; that stretch reads AEEKIEAVDETKPKESARQDEGKGEEREADQEHA.

The protein belongs to the neuromodulin family. Identified in a complex containing FGFR4, NCAM1, CDH2, PLCG1, FRS2, SRC, SHC1, GAP43 and CTTN. Interacts (via IQ domain) with calmodulin. Binds calmodulin with a greater affinity in the absence of Ca(2+) than in its presence. In terms of processing, phosphorylated. Phosphorylation of this protein by a protein kinase C is specifically correlated with certain forms of synaptic plasticity. Post-translationally, palmitoylated by ZDHHC3. Palmitoylation is regulated by ARF6 and is essential for plasma membrane association and axonal and dendritic filopodia induction. Deacylated by LYPLA2.

It is found in the cell membrane. The protein localises to the cell projection. The protein resides in the growth cone membrane. Its subcellular location is the synapse. It localises to the filopodium membrane. It is found in the perikaryon. The protein localises to the dendrite. The protein resides in the axon. Its subcellular location is the cytoplasm. Its function is as follows. This protein is associated with nerve growth. It is a major component of the motile 'growth cones' that form the tips of elongating axons. Plays a role in axonal and dendritic filopodia induction. In Felis catus (Cat), this protein is Neuromodulin (GAP43).